We begin with the raw amino-acid sequence, 91 residues long: Small integral membrane protein 12-B (91 aa).

Residues 12 to 34 (YAPYITFPVAFVVGAVGYQLEWF) traverse the membrane as a helical segment.

This sequence belongs to the SMIM12 family.

Its subcellular location is the membrane. The polypeptide is Small integral membrane protein 12-B (smim12-b) (Xenopus laevis (African clawed frog)).